The sequence spans 288 residues: 33 kDa chaperonin (288 aa).

Intrachain disulfides connect C235/C237 and C268/C271.

Belongs to the HSP33 family. Under oxidizing conditions two disulfide bonds are formed involving the reactive cysteines. Under reducing conditions zinc is bound to the reactive cysteines and the protein is inactive.

It localises to the cytoplasm. In terms of biological role, redox regulated molecular chaperone. Protects both thermally unfolding and oxidatively damaged proteins from irreversible aggregation. Plays an important role in the bacterial defense system toward oxidative stress. The chain is 33 kDa chaperonin from Streptococcus thermophilus (strain ATCC BAA-250 / LMG 18311).